The chain runs to 494 residues: Anthranilate synthase component 1 (494 aa).

Residues Ser-50 and 276-278 (PYM) each bind L-tryptophan. Residue 311–312 (GT) participates in chorismate binding. Glu-338 lines the Mg(2+) pocket. Chorismate contacts are provided by residues Tyr-426, Arg-446, 460–462 (GAG), and Gly-462. Residue Glu-475 participates in Mg(2+) binding.

It belongs to the anthranilate synthase component I family. Heterotetramer consisting of two non-identical subunits: a beta subunit (TrpG) and a large alpha subunit (TrpE). Mg(2+) is required as a cofactor.

The enzyme catalyses chorismate + L-glutamine = anthranilate + pyruvate + L-glutamate + H(+). It functions in the pathway amino-acid biosynthesis; L-tryptophan biosynthesis; L-tryptophan from chorismate: step 1/5. Feedback inhibited by tryptophan. In terms of biological role, part of a heterotetrameric complex that catalyzes the two-step biosynthesis of anthranilate, an intermediate in the biosynthesis of L-tryptophan. In the first step, the glutamine-binding beta subunit (TrpG) of anthranilate synthase (AS) provides the glutamine amidotransferase activity which generates ammonia as a substrate that, along with chorismate, is used in the second step, catalyzed by the large alpha subunit of AS (TrpE) to produce anthranilate. In the absence of TrpG, TrpE can synthesize anthranilate directly from chorismate and high concentrations of ammonia. This Acetivibrio thermocellus (Hungateiclostridium thermocellum) protein is Anthranilate synthase component 1 (trpE).